We begin with the raw amino-acid sequence, 768 residues long: DNA ligase (768 aa).

A compositionally biased stretch (low complexity) spans 1–11; the sequence is MSPSAPANSAP. The interval 1–28 is disordered; sequence MSPSAPANSAPDPDRNGVPDVGPASAAP. Residues 62-66, 111-112, and Glu-148 contribute to the NAD(+) site; these read DAEYD and SI. Catalysis depends on Lys-150, which acts as the N6-AMP-lysine intermediate. NAD(+) is bound by residues Arg-171, Glu-238, Lys-361, and Lys-385. Zn(2+) contacts are provided by Cys-484, Cys-487, Cys-502, and Cys-508. A BRCT domain is found at 670–759; that stretch reads AAELPLAGKT…EADADADAEG (90 aa).

Belongs to the NAD-dependent DNA ligase family. LigA subfamily. Mg(2+) is required as a cofactor. Requires Mn(2+) as cofactor.

The catalysed reaction is NAD(+) + (deoxyribonucleotide)n-3'-hydroxyl + 5'-phospho-(deoxyribonucleotide)m = (deoxyribonucleotide)n+m + AMP + beta-nicotinamide D-nucleotide.. DNA ligase that catalyzes the formation of phosphodiester linkages between 5'-phosphoryl and 3'-hydroxyl groups in double-stranded DNA using NAD as a coenzyme and as the energy source for the reaction. It is essential for DNA replication and repair of damaged DNA. The chain is DNA ligase from Leptothrix cholodnii (strain ATCC 51168 / LMG 8142 / SP-6) (Leptothrix discophora (strain SP-6)).